The sequence spans 237 residues: Urease accessory protein UreF (237 aa).

It belongs to the UreF family. UreD, UreF and UreG form a complex that acts as a GTP-hydrolysis-dependent molecular chaperone, activating the urease apoprotein by helping to assemble the nickel containing metallocenter of UreC. The UreE protein probably delivers the nickel.

It localises to the cytoplasm. Its function is as follows. Required for maturation of urease via the functional incorporation of the urease nickel metallocenter. The sequence is that of Urease accessory protein UreF from Streptococcus thermophilus (strain ATCC BAA-250 / LMG 18311).